The chain runs to 159 residues: 6,7-dimethyl-8-ribityllumazine synthase (159 aa).

5-amino-6-(D-ribitylamino)uracil-binding positions include F22, 57–59, and 81–83; these read TYE and TII. Residue 86 to 87 coordinates (2S)-2-hydroxy-3-oxobutyl phosphate; it reads ST. H89 functions as the Proton donor in the catalytic mechanism. Position 114 (M114) interacts with 5-amino-6-(D-ribitylamino)uracil. Residue R128 coordinates (2S)-2-hydroxy-3-oxobutyl phosphate.

The protein belongs to the DMRL synthase family. In terms of assembly, forms an icosahedral capsid composed of 60 subunits, arranged as a dodecamer of pentamers.

The enzyme catalyses (2S)-2-hydroxy-3-oxobutyl phosphate + 5-amino-6-(D-ribitylamino)uracil = 6,7-dimethyl-8-(1-D-ribityl)lumazine + phosphate + 2 H2O + H(+). Its pathway is cofactor biosynthesis; riboflavin biosynthesis; riboflavin from 2-hydroxy-3-oxobutyl phosphate and 5-amino-6-(D-ribitylamino)uracil: step 1/2. In terms of biological role, catalyzes the formation of 6,7-dimethyl-8-ribityllumazine by condensation of 5-amino-6-(D-ribitylamino)uracil with 3,4-dihydroxy-2-butanone 4-phosphate. This is the penultimate step in the biosynthesis of riboflavin. This Buchnera aphidicola subsp. Schizaphis graminum (strain Sg) protein is 6,7-dimethyl-8-ribityllumazine synthase.